Here is a 143-residue protein sequence, read N- to C-terminus: Universal stress protein A (143 aa).

Belongs to the universal stress protein A family. As to quaternary structure, homodimer.

It is found in the cytoplasm. Functionally, required for resistance to DNA-damaging agents. The polypeptide is Universal stress protein A (uspA) (Photorhabdus laumondii subsp. laumondii (strain DSM 15139 / CIP 105565 / TT01) (Photorhabdus luminescens subsp. laumondii)).